Here is a 294-residue protein sequence, read N- to C-terminus: Putative maltodextrin utilization protein YvdJ (294 aa).

A run of 4 helical transmembrane segments spans residues 35–55, 184–204, 228–248, and 249–269; these read LSFL…VSFV, MIMM…TFVL, IAIC…MVHF, and DLIT…SFAF.

The protein localises to the cell membrane. Its function is as follows. Could have a role in maltodextrin utilization. This chain is Putative maltodextrin utilization protein YvdJ (yvdJ), found in Bacillus subtilis (strain 168).